We begin with the raw amino-acid sequence, 189 residues long: Chitin synthase 1 (189 aa).

The protein belongs to the chitin synthase family. Class I subfamily.

The protein localises to the cell membrane. It carries out the reaction [(1-&gt;4)-N-acetyl-beta-D-glucosaminyl](n) + UDP-N-acetyl-alpha-D-glucosamine = [(1-&gt;4)-N-acetyl-beta-D-glucosaminyl](n+1) + UDP + H(+). In terms of biological role, polymerizes chitin, a structural polymer of the cell wall and septum, by transferring the sugar moiety of UDP-GlcNAc to the non-reducing end of the growing chitin polymer. The polypeptide is Chitin synthase 1 (CHS1) (Rhinocladiella atrovirens).